Consider the following 231-residue polypeptide: Orotidine 5'-phosphate decarboxylase (231 aa).

Residues Asp-11, Lys-33, 60–69 (DLKLHDIPNT), Thr-117, Arg-179, Gln-187, Gly-207, and Arg-208 each bind substrate. Lys-62 serves as the catalytic Proton donor.

Belongs to the OMP decarboxylase family. Type 1 subfamily. In terms of assembly, homodimer.

The catalysed reaction is orotidine 5'-phosphate + H(+) = UMP + CO2. The protein operates within pyrimidine metabolism; UMP biosynthesis via de novo pathway; UMP from orotate: step 2/2. Functionally, catalyzes the decarboxylation of orotidine 5'-monophosphate (OMP) to uridine 5'-monophosphate (UMP). This is Orotidine 5'-phosphate decarboxylase from Ehrlichia chaffeensis (strain ATCC CRL-10679 / Arkansas).